The chain runs to 154 residues: Ribosome maturation factor RimP (154 aa).

It belongs to the RimP family.

The protein resides in the cytoplasm. Required for maturation of 30S ribosomal subunits. This Heliobacterium modesticaldum (strain ATCC 51547 / Ice1) protein is Ribosome maturation factor RimP.